Reading from the N-terminus, the 599-residue chain is Kinesin light chain 2 (599 aa).

Residues Ile78–Ile143 adopt a coiled-coil conformation. Residues Glu154–Leu163 are compositionally biased toward basic and acidic residues. The segment at Glu154–His188 is disordered. 2 positions are modified to phosphoserine: Ser174 and Ser178. 5 TPR repeats span residues Leu197–Thr230, Ala239–Thr272, Ala281–Val314, Ala323–Arg356, and Ala365–Lys398. Ser443 is modified (phosphoserine). One copy of the TPR 6 repeat lies at Asn447–Gly480. The segment at Leu492 to Gly541 is disordered. Phosphoserine is present on residues Ser505 and Ser515. The segment covering Gly532 to Gly541 has biased composition (low complexity). Phosphoserine occurs at positions 574, 575, and 582.

It belongs to the kinesin light chain family. In terms of assembly, oligomeric complex composed of two heavy chains and two light chains. Interacts (via TPR repeats) with PLEKHM2.

It is found in the cytoplasm. The protein resides in the cytoskeleton. The protein localises to the lysosome membrane. Its function is as follows. Kinesin is a microtubule-associated force-producing protein that plays a role in organelle transport. The light chain functions in coupling of cargo to the heavy chain or in the modulation of its ATPase activity. Through binding with PLEKHM2 and ARL8B, recruits kinesin-1 to lysosomes and hence direct lysosomes movement toward microtubule plus ends. This is Kinesin light chain 2 from Mus musculus (Mouse).